Reading from the N-terminus, the 1758-residue chain is Collagen alpha-2(IV) chain (1758 aa).

The first 26 residues, 1–26 (MKQRAALGPVLRLAILALLAVSYVQS), serve as a signal peptide directing secretion. Residues 27-42 (QATCRDCSNRGCFCVG) are 7S domain. Residues 42 to 1527 (GEKGSMGAPG…PGAPGAAGPA (1486 aa)) form a triple-helical region region. Residues 47–62 (MGAPGPQGPPGTQGIR) are compositionally biased toward low complexity. Disordered stretches follow at residues 47-943 (MGAP…GAPG), 955-1304 (GVPG…GLPG), 1316-1339 (GFPGAKGDLGANGIPGKRGEDGLP), and 1367-1525 (GFPG…GAAG). Gly residues predominate over residues 102–111 (GNDGGNGRPG). The span at 134-149 (PGRPGPPGMPGFPGPP) shows a compositional bias: pro residues. Positions 189-198 (YPGEKGDRGD) are enriched in basic and acidic residues. A compositionally biased stretch (low complexity) spans 224-234 (PKGDPGDLGSV). An O-linked (Xyl...) (glycosaminoglycan) serine glycan is attached at Ser-248. Positions 258 to 267 (PGEKGDKGEP) are enriched in basic and acidic residues. The span at 268–283 (GEGGQRGYPGNGGLSG) shows a compositional bias: gly residues. Residues 367–382 (PGPPGLPGRPGNPGPP) show a composition bias toward pro residues. Residues 398–407 (GNTGGPGLPG) show a composition bias toward gly residues. Composition is skewed to low complexity over residues 408-417 (YPGNEGLPGP) and 429-439 (APGVSGPSGIP). A compositionally biased stretch (basic and acidic residues) spans 464 to 479 (KDGKPGLDGAPGRKGE). Composition is skewed to low complexity over residues 495 to 509 (GLPGAPGQRGAPGPN) and 568 to 584 (PVGDAGDDGLPGPAGRP). The span at 638-648 (PSGPVGPPGAP) shows a compositional bias: pro residues. 3 stretches are compositionally biased toward gly residues: residues 693–702 (GAKGDGGLPG), 737–746 (GTKGEGGYPG), and 782–791 (GDKGFGGVPG). Over residues 839–858 (LPGLPGTPGLEGQRGFPGAP) the composition is skewed to low complexity. A compositionally biased stretch (gly residues) spans 859–868 (GLKGGDGLPG). Low complexity predominate over residues 929–938 (APGQSGAPGL). Residues 958 to 967 (GFKGDGGLPG) are compositionally biased toward gly residues. Residues 968–980 (LPGLNGPKGEPGV) are compositionally biased toward low complexity. Residues 988–997 (GMKGNGGLPG) show a composition bias toward gly residues. A compositionally biased stretch (low complexity) spans 1040–1056 (LPGQPGLRGPQGPSGLP). Residues 1194–1203 (GLPGLGGEKG) show a composition bias toward gly residues. The segment covering 1237–1250 (FPGQPGQEGLPGLS) has biased composition (low complexity). A compositionally biased stretch (gly residues) spans 1251–1260 (GEKGMGGLPG). The segment covering 1373–1382 (GLKGEGGLPG) has biased composition (gly residues). Low complexity-rich tracts occupy residues 1413-1425 (LPGRDGLPGADGP) and 1433-1454 (GPQNLVEPGEKGLPGLPGAPGL). 2 stretches are compositionally biased toward gly residues: residues 1492–1501 (GEKGMGGLPG) and 1507–1516 (GQPGGPGAPG). The region spanning 1531–1754 (GFVLVKHSQT…SRCQVCVKST (224 aa)) is the Collagen IV NC1 domain. 6 disulfides stabilise this stretch: Cys-1546–Cys-1635, Cys-1579–Cys-1632, Cys-1591–Cys-1597, Cys-1654–Cys-1750, Cys-1688–Cys-1747, and Cys-1700–Cys-1707.

Belongs to the type IV collagen family. As to quaternary structure, trimers of two alpha 1(IV) and one alpha 2(IV) chain. Type IV collagen forms a mesh-like network linked through intermolecular interactions between 7S domains and between NC1 domains. Post-translationally, prolines at the third position of the tripeptide repeating unit (G-X-Y) are hydroxylated in some or all of the chains. In terms of processing, type IV collagens contain numerous cysteine residues which are involved in inter- and intramolecular disulfide bonding. 12 of these, located in the NC1 domain, are conserved in all known type IV collagens. The trimeric structure of the NC1 domains is stabilized by covalent bonds between Lys and Met residues. As to expression, localizes to the basement membrane between distal tip cells and the germline. Localizes to the intestinal basement membrane.

The protein localises to the secreted. It localises to the extracellular space. Its subcellular location is the extracellular matrix. It is found in the basement membrane. Collagen type IV is specific for basement membranes. Together with fbl-1 and downstream of metalloprotease mig-17, recruits nidogen nid-1 to the gonad basement membrane thereby probably inducing basement membrane remodeling required for the directional migration of distal tip cells. Required to restrict presynaptic growth at the neuromuscular junctions in late larval stage and in adult motor neurons. Vital for embryonic development. In Caenorhabditis elegans, this protein is Collagen alpha-2(IV) chain.